We begin with the raw amino-acid sequence, 633 residues long: DNA mismatch repair protein MutL (633 aa).

It belongs to the DNA mismatch repair MutL/HexB family.

In terms of biological role, this protein is involved in the repair of mismatches in DNA. It is required for dam-dependent methyl-directed DNA mismatch repair. May act as a 'molecular matchmaker', a protein that promotes the formation of a stable complex between two or more DNA-binding proteins in an ATP-dependent manner without itself being part of a final effector complex. This Macrococcus caseolyticus (strain JCSC5402) (Macrococcoides caseolyticum) protein is DNA mismatch repair protein MutL.